The chain runs to 61 residues: Small ribosomal subunit protein uS14 (61 aa).

Positions 1 to 12 (MSESETTDEPDS) are enriched in acidic residues. Residues 1–25 (MSESETTDEPDSETASSERTGQLES) are disordered. Zn(2+) is bound by residues C26, C29, C44, and C47.

Belongs to the universal ribosomal protein uS14 family. Zinc-binding uS14 subfamily. In terms of assembly, part of the 30S ribosomal subunit. Zn(2+) serves as cofactor.

Binds 16S rRNA, required for the assembly of 30S particles. This is Small ribosomal subunit protein uS14 from Haloarcula marismortui (strain ATCC 43049 / DSM 3752 / JCM 8966 / VKM B-1809) (Halobacterium marismortui).